The chain runs to 431 residues: Adenosylhomocysteinase (431 aa).

Substrate-binding residues include threonine 56, aspartate 131, and glutamate 156. Residue 157–159 (TTT) participates in NAD(+) binding. Lysine 186 and aspartate 190 together coordinate substrate. NAD(+) is bound by residues asparagine 191, 222-227 (GDVGKG), glutamate 243, 299-301 (IGH), and asparagine 345.

It belongs to the adenosylhomocysteinase family. As to quaternary structure, homotetramer. NAD(+) is required as a cofactor.

It catalyses the reaction S-adenosyl-L-homocysteine + H2O = L-homocysteine + adenosine. It participates in amino-acid biosynthesis; L-homocysteine biosynthesis; L-homocysteine from S-adenosyl-L-homocysteine: step 1/1. In terms of biological role, adenosylhomocysteine is a competitive inhibitor of S-adenosyl-L-methionine-dependent methyl transferase reactions; therefore adenosylhomocysteinase may play a key role in the control of methylations via regulation of the intracellular concentration of adenosylhomocysteine. The polypeptide is Adenosylhomocysteinase (sahA) (Dictyostelium discoideum (Social amoeba)).